A 367-amino-acid chain; its full sequence is Phosphoribosylformylglycinamidine cyclo-ligase (367 aa).

The protein belongs to the AIR synthase family.

It localises to the cytoplasm. It carries out the reaction 2-formamido-N(1)-(5-O-phospho-beta-D-ribosyl)acetamidine + ATP = 5-amino-1-(5-phospho-beta-D-ribosyl)imidazole + ADP + phosphate + H(+). Its pathway is purine metabolism; IMP biosynthesis via de novo pathway; 5-amino-1-(5-phospho-D-ribosyl)imidazole from N(2)-formyl-N(1)-(5-phospho-D-ribosyl)glycinamide: step 2/2. This Cyanothece sp. (strain PCC 7425 / ATCC 29141) protein is Phosphoribosylformylglycinamidine cyclo-ligase.